A 486-amino-acid chain; its full sequence is Cephamycin export protein CmcT (486 aa).

14 helical membrane-spanning segments follow: residues 24–44, 56–76, 88–108, 121–141, 153–173, 178–198, 210–230, 241–261, 284–304, 317–337, 345–365, 369–389, 418–438, and 450–470; these read VLAC…TVAL, ASLQ…LLFG, VFLG…LATS, AGAA…FAEG, AVAL…TEFL, VLLV…RVLA, LDLP…LGVS, AVAV…VVEA, LAML…TLSM, LGFV…VPWL, VLIA…SLLT, AYLG…GLVG, FGGA…TSGS, and FVGI…LPAL.

The protein belongs to the major facilitator superfamily.

It localises to the cell membrane. Functionally, involved in cephamycin export. In Amycolatopsis lactamdurans (Nocardia lactamdurans), this protein is Cephamycin export protein CmcT (cmcT).